A 473-amino-acid polypeptide reads, in one-letter code: tRNA modification GTPase MnmE (473 aa).

The (6S)-5-formyl-5,6,7,8-tetrahydrofolate site is built by arginine 30, glutamate 95, and arginine 134. The region spanning 230 to 394 (GVSTVIAGRP…LKLLMASMVE (165 aa)) is the TrmE-type G domain. Residues 240 to 245 (NAGKST), 259 to 265 (SHMPGTT), and 284 to 287 (DTAG) each bind GTP. 2 residues coordinate Mg(2+): serine 244 and threonine 265. Residue lysine 473 participates in (6S)-5-formyl-5,6,7,8-tetrahydrofolate binding.

The protein belongs to the TRAFAC class TrmE-Era-EngA-EngB-Septin-like GTPase superfamily. TrmE GTPase family. Homodimer. Heterotetramer of two MnmE and two MnmG subunits. Requires K(+) as cofactor.

The protein localises to the cytoplasm. Functionally, exhibits a very high intrinsic GTPase hydrolysis rate. Involved in the addition of a carboxymethylaminomethyl (cmnm) group at the wobble position (U34) of certain tRNAs, forming tRNA-cmnm(5)s(2)U34. This Chlorobium luteolum (strain DSM 273 / BCRC 81028 / 2530) (Pelodictyon luteolum) protein is tRNA modification GTPase MnmE.